Consider the following 61-residue polypeptide: MRMSKTVKVTQLKSSIGRLPKHRATLKGLGLRRINHTVELEDTPSVRGMINKVYYMVKVED.

The protein belongs to the universal ribosomal protein uL30 family. Part of the 50S ribosomal subunit.

The sequence is that of Large ribosomal subunit protein uL30 from Colwellia psychrerythraea (strain 34H / ATCC BAA-681) (Vibrio psychroerythus).